A 178-amino-acid chain; its full sequence is Large ribosomal subunit protein uL6 (178 aa).

The protein belongs to the universal ribosomal protein uL6 family. In terms of assembly, part of the 50S ribosomal subunit.

In terms of biological role, this protein binds to the 23S rRNA, and is important in its secondary structure. It is located near the subunit interface in the base of the L7/L12 stalk, and near the tRNA binding site of the peptidyltransferase center. This Helicobacter pylori (strain J99 / ATCC 700824) (Campylobacter pylori J99) protein is Large ribosomal subunit protein uL6.